Here is a 1204-residue protein sequence, read N- to C-terminus: Exportin-5 (1204 aa).

Residues 1 to 108 (MEMEQVNALC…ANGTLRILEE (108 aa)) form a necessary for interaction with Ran region. N6-acetyllysine is present on lysine 396. A necessary for interaction with ILF3 region spans residues 533–640 (ELLQLVLNFE…KQLLSNELLL (108 aa)). The segment at 641-642 (TQ) is pre-siRNA binding.

Belongs to the exportin family. In terms of assembly, component of a nuclear export receptor complex composed of XPO5, RAN, dsRNA-binding proteins and dsRNA. Found in a nuclear export complex with XPO5, RAN, EEF1A1, and aminoacylated tRNA. Found in a nuclear export complex with XPO5, RAN, ILF3 and dsRNA. Found in a nuclear export complex with XPO5, RAN and pre-miRNA. Found in a nuclear export complex with XPO5, RAN, ILF3 and minihelix VA1 dsRNA. Found in a nuclear export complex with XPO5, RAN, ILF3, ZNF346 and dsRNA. Interacts with EEF1A1, ILF3, NUP153, NUP214 and ZNF346. Interacts with RAN and cargo proteins in a GTP-dependent manner. Interacts with ADAR/ADAR1 (via DRBM domains). Interacts with SMAD4; mediates nuclear export of SMAD4. Interacts with RAN (GTP-bound form).

The protein resides in the nucleus. The protein localises to the cytoplasm. Functionally, mediates the nuclear export of proteins bearing a double-stranded RNA binding domain (dsRBD) and double-stranded RNAs (cargos). XPO5 in the nucleus binds cooperatively to the RNA and to the GTPase Ran in its active GTP-bound form. Proteins containing dsRBDs can associate with this trimeric complex through the RNA. Docking of this complex to the nuclear pore complex (NPC) is mediated through binding to nucleoporins. Upon transit of a nuclear export complex into the cytoplasm, hydrolysis of Ran-GTP to Ran-GDP (induced by RANBP1 and RANGAP1, respectively) cause disassembly of the complex and release of the cargo from the export receptor. XPO5 then returns to the nuclear compartment by diffusion through the nuclear pore complex, to mediate another round of transport. The directionality of nuclear export is thought to be conferred by an asymmetric distribution of the GTP- and GDP-bound forms of Ran between the cytoplasm and nucleus. Overexpression may in some circumstances enhance RNA-mediated gene silencing (RNAi). Mediates nuclear export of ADAR/ADAR1 in a RanGTP-dependent manner. Its function is as follows. Mediates the nuclear export of micro-RNA precursors, which form short hairpins. Also mediates the nuclear export of synthetic short hairpin RNAs used for RNA interference. In some circumstances can also mediate the nuclear export of deacylated and aminoacylated tRNAs. Specifically recognizes dsRNAs that lack a 5'-overhang in a sequence-independent manner, have only a short 3'-overhang, and that have a double-stranded length of at least 15 base-pairs. Binding is dependent on Ran-GTP. The polypeptide is Exportin-5 (Xpo5) (Mus musculus (Mouse)).